The following is a 957-amino-acid chain: Histone-lysine N-methyltransferase, H3 lysine-9 specific SUVH3 (957 aa).

Residues 73 to 243 (GHPPGVALGD…PQVCKFLMHG (171 aa)) form the YDG domain. The interval 182-209 (EAGGGEGGGGGEGGGGAKKGKGGKGGGK) is disordered. The span at 183-198 (AGGGEGGGGGEGGGGA) shows a compositional bias: gly residues. The Pre-SET domain maps to 319-441 (DVSGGQEAVP…HECGDGCSAK (123 aa)). Positions 455 to 920 (LPLEVFMTES…QLEELSYNYG (466 aa)) constitute an SET domain. Disordered stretches follow at residues 552–595 (DAAR…GGAE), 611–647 (AAGT…SSGA), and 783–805 (PPAL…GGGG). The span at 560-578 (QQPQQQQPQQQQQQPAAGG) shows a compositional bias: low complexity. Residues 793–805 (GNGGTTGSGGGGG) show a composition bias toward gly residues. In terms of domain architecture, Post-SET spans 941-957 (FVMQCNCGAVGCIGNLM).

The protein belongs to the class V-like SAM-binding methyltransferase superfamily. Histone-lysine methyltransferase family. Suvar3-9 subfamily.

The protein resides in the nucleus. It localises to the chromosome. The catalysed reaction is L-lysyl(9)-[histone H3] + S-adenosyl-L-methionine = N(6)-methyl-L-lysyl(9)-[histone H3] + S-adenosyl-L-homocysteine + H(+). Its function is as follows. Histone methyltransferase. Monomethylates specifically 'Lys-9' of histone H3. H3 'Lys-9Me1' (H3K9me1) functions as an epigenetic mark of repressed chromatin. The protein is Histone-lysine N-methyltransferase, H3 lysine-9 specific SUVH3 (SUVH3) of Chlamydomonas reinhardtii (Chlamydomonas smithii).